Here is a 338-residue protein sequence, read N- to C-terminus: Heat shock factor 2-binding protein (338 aa).

Residues 1–20 (MAATVGDGSGTEEACRNMES) are disordered. Positions 12–126 (EEACRNMESK…LLQQAEYCTQ (115 aa)) form a coiled coil. Positions 18–55 (MESKEEFVKVRKKDLERLTTEVMQIRDFLPRILNGELL) are interaction with BRME1. Residues 87–338 (ARLETAQADS…EDLRALDCNV (252 aa)) form an interaction with BRCA2 region.

Interacts (via C-terminus) with BNC1. Associates with HSF2. The interaction seems to occur between the trimerization domain of HSF2 and the N-terminal hydrophilic region of HSF2BP. Interacts (via N-terminus) with BRME1. Interacts with BRCA2 and BRME1; the interactions are direct and allow the formation of a ternary complex. The complex BRME1:HSF2BP:BRCA2 interacts with SPATA22, MEIOB and RAD51. Sumoylated by UBE2I in response to MEKK1-mediated stimuli. As to expression, expressed in testis and, to a lesser extent, in lung and muscle.

The protein resides in the cytoplasm. Its subcellular location is the chromosome. Its function is as follows. Meiotic recombination factor component of recombination bridges involved in meiotic double-strand break repair. Modulates the localization of recombinases DMC1:RAD51 to meiotic double-strand break (DSB) sites through the interaction with BRCA2 and its recruitment during meiotic recombination. Indispensable for the DSB repair, homologous synapsis, and crossover formation that are needed for progression past metaphase I, is essential for spermatogenesis and male fertility. Required for proper recombinase recruitment in female meiosis. Inhibits BNC1 transcriptional activity during spermatogenesis, probably by sequestering it in the cytoplasm. May be involved in modulating HSF2 activation in testis. The protein is Heat shock factor 2-binding protein of Mus musculus (Mouse).